The following is a 1153-amino-acid chain: Nitric oxide synthase (1153 aa).

Ser3 serves as a coordination point for (6R)-L-erythro-5,6,7,8-tetrahydrobiopterin. Heme b is bound at residue Cys82. Positions 145, 254, and 264 each coordinate L-arginine. Phe358 is a binding site for (6R)-L-erythro-5,6,7,8-tetrahydrobiopterin. A calmodulin-binding region spans residues 397–417; the sequence is PKRKLGFKALARAVEFSASLM. Positions 427–610 constitute a Flavodoxin-like domain; it reads CSIFYATETG…SFRAWSEEVF (184 aa). 556-587 contacts FMN; the sequence is VFGLGSKAYPYYAAYGKYIYLMLQELGAERLV. An FAD-binding FR-type domain is found at 660–903; that stretch reads KEVMPLILAE…LRSAPHFHLP (244 aa). Residues 697–708 and 836–846 each bind FAD; these read YAPGDHVAIFPA and LQPRYYSISSS. 911–929 serves as a coordination point for NADP(+); sequence IMIGPGSGIAPFRSFWQQR. Tandem repeats lie at residues 934–940, 941–947, 948–954, 955–961, 962–968, 969–975, 976–982, 983–989, 990–996, 997–1003, and 1004–1010. Residues 934–1010 are 11 X 7 AA tandem repeats of E-[NTR]-[ST]-[IM]-[PLQ]-[SP]-[CW]; it reads ENTMPSCENT…PSWERTMQPC (77 aa). Residue 1089 to 1104 participates in NADP(+) binding; the sequence is GGHFYVSGDVSMAHDV.

It belongs to the NOS family. The cofactor is heme b. Requires FAD as cofactor. FMN serves as cofactor. In terms of tissue distribution, expressed in the central nervous system, in the serotonergic cerebral giant cells. The isoform Long and isoform Short are expressed equally in the CNS.

It carries out the reaction 2 L-arginine + 3 NADPH + 4 O2 + H(+) = 2 L-citrulline + 2 nitric oxide + 3 NADP(+) + 4 H2O. Stimulated by calcium/calmodulin. Its function is as follows. Produces nitric oxide (NO) which is a messenger molecule with diverse functions throughout the body. This Lymnaea stagnalis (Great pond snail) protein is Nitric oxide synthase (NOS).